A 130-amino-acid chain; its full sequence is Small ribosomal subunit protein uS9 (130 aa).

It belongs to the universal ribosomal protein uS9 family.

The polypeptide is Small ribosomal subunit protein uS9 (Caldicellulosiruptor bescii (strain ATCC BAA-1888 / DSM 6725 / KCTC 15123 / Z-1320) (Anaerocellum thermophilum)).